Consider the following 186-residue polypeptide: TATA box-binding protein-like 1 (186 aa).

Belongs to the TBP family. Binds TFIIA and TFIIB.

The protein localises to the cytoplasm. The protein resides in the nucleus. Part of a specialized transcription system that mediates the transcription of most ribosomal proteins through the 5'-TCT-3' motif which is a core promoter element at these genes. Seems to also mediate the transcription of NF1. Does not bind the TATA box. The polypeptide is TATA box-binding protein-like 1 (TBPL1) (Bos taurus (Bovine)).